We begin with the raw amino-acid sequence, 150 residues long: PTTG1IP family member 2 (150 aa).

The N-terminal stretch at 1–19 is a signal peptide; the sequence is MCWLRAWSHILLPVFLSVA. The Extracellular segment spans residues 20 to 98; the sequence is LIQLIFNLSD…SIFWANCNVD (79 aa). An N-linked (GlcNAc...) asparagine glycan is attached at N26. The chain crosses the membrane as a helical span at residues 99–119; that stretch reads LFGIVMLILIVILALAFLWYC. Over 120-150 the chain is Cytoplasmic; the sequence is LAYYFYMQQHMALYARHGQVPVYNWDAPGDW.

It is found in the membrane. This chain is PTTG1IP family member 2, found in Mus musculus (Mouse).